A 165-amino-acid chain; its full sequence is Peptide deformylase (165 aa).

Residues C88 and H130 each coordinate Fe cation. Residue E131 is part of the active site. H134 is a binding site for Fe cation.

Belongs to the polypeptide deformylase family. Fe(2+) is required as a cofactor.

It carries out the reaction N-terminal N-formyl-L-methionyl-[peptide] + H2O = N-terminal L-methionyl-[peptide] + formate. Its function is as follows. Removes the formyl group from the N-terminal Met of newly synthesized proteins. Requires at least a dipeptide for an efficient rate of reaction. N-terminal L-methionine is a prerequisite for activity but the enzyme has broad specificity at other positions. The sequence is that of Peptide deformylase from Borreliella burgdorferi (strain ATCC 35210 / DSM 4680 / CIP 102532 / B31) (Borrelia burgdorferi).